Consider the following 259-residue polypeptide: MSDEETEQVEEQYEEEEEAQEEEVQEEAPEPEEVQEEEKPRPKLTAPKIPEGEKVDFDDIQKKRQNKDLMELQALIDSHFEARKKEEEELIALKERIEKRRAERAEQQRIRAEKERERQNRLAEEKARREEEDAKRRAEDDLKKKKALSSMGANYSSYLAKADQKRGKKQTAREMKKKILAERRKPLNIDHLSDDKLRDKAKELWDTLYQLETDKFEFGEKLKRQKYDITTLRSRIDQAQKHSKKAGATAKGKVGGRWK.

The segment covering 1-36 has biased composition (acidic residues); it reads MSDEETEQVEEQYEEEEEAQEEEVQEEAPEPEEVQE. Residues 1-62 are disordered; sequence MSDEETEQVE…EKVDFDDIQK (62 aa). N-acetylserine is present on S2. S2 is modified (phosphoserine). Basic and acidic residues predominate over residues 50 to 62; the sequence is PEGEKVDFDDIQK. Phosphoserine is present on S78. Residues 101 to 143 show a composition bias toward basic and acidic residues; the sequence is RAERAEQQRIRAEKERERQNRLAEEKARREEEDAKRRAEDDLK. The tract at residues 101–180 is disordered; sequence RAERAEQQRI…TAREMKKKIL (80 aa). A phosphoserine mark is found at S149, S156, and S157. Over residues 171–180 the composition is skewed to basic and acidic residues; sequence TAREMKKKIL. Position 193 is a phosphoserine (S193). At Y209 the chain carries Phosphotyrosine. The tract at residues 235-259 is disordered; it reads RIDQAQKHSKKAGATAKGKVGGRWK.

This sequence belongs to the troponin T family.

Functionally, troponin T is the tropomyosin-binding subunit of troponin, the thin filament regulatory complex which confers calcium-sensitivity to striated muscle actomyosin ATPase activity. This is Troponin T, fast skeletal muscle (Tnnt3) from Rattus norvegicus (Rat).